We begin with the raw amino-acid sequence, 564 residues long: Proline--tRNA ligase (564 aa).

Belongs to the class-II aminoacyl-tRNA synthetase family. ProS type 1 subfamily. In terms of assembly, homodimer.

The protein localises to the cytoplasm. It catalyses the reaction tRNA(Pro) + L-proline + ATP = L-prolyl-tRNA(Pro) + AMP + diphosphate. Catalyzes the attachment of proline to tRNA(Pro) in a two-step reaction: proline is first activated by ATP to form Pro-AMP and then transferred to the acceptor end of tRNA(Pro). As ProRS can inadvertently accommodate and process non-cognate amino acids such as alanine and cysteine, to avoid such errors it has two additional distinct editing activities against alanine. One activity is designated as 'pretransfer' editing and involves the tRNA(Pro)-independent hydrolysis of activated Ala-AMP. The other activity is designated 'posttransfer' editing and involves deacylation of mischarged Ala-tRNA(Pro). The misacylated Cys-tRNA(Pro) is not edited by ProRS. The sequence is that of Proline--tRNA ligase from Xanthomonas campestris pv. campestris (strain 8004).